We begin with the raw amino-acid sequence, 347 residues long: Mitochondrial carrier protein rim2 (347 aa).

Solcar repeat units lie at residues 32–136 (PPPL…GKRI), 146–234 (ENSQ…FKHA), and 256–345 (LDWG…IMHF). 6 helical membrane-spanning segments follow: residues 38-58 (FIAGGVAGMLGAIATAPLDVV), 105-125 (TRALFRGLGPNLIGTIPARSI), 152-172 (LMAAAIAGVITSAATNPIWLV), 214-233 (SLLGVGESTLQWVLYEKFKH), 262-282 (LGGAGIAKFMAAGIAYPHEVV), and 317-338 (LYGGLTAHLLRVVPNACILFGS).

The protein resides in the mitochondrion inner membrane. The enzyme catalyses 5-methyl-UTP(out) + UTP(in) = 5-methyl-UTP(in) + UTP(out). Mitochondrial transporter that imports/exports pyrimidine nucleotides into and from mitochondria. Selectively transports uridine, thymidine, and cytosine (deoxy)nucleoside di- and triphosphates by an antiport mechanism. Also transports, with lower efficiency, uridine, thymidine, and cytosine (deoxy)nucleoside monophosphates as well as guanosine (deoxy)nucleoside di- and triphosphate. May import (deoxy)nucleoside triphosphates in exchange for intramitochondrial (deoxy)nucleoside monophosphates, thus providing precursors necessary for de novo synthesis of mitochondrial DNA and RNA while exporting products of their catabolism. Mediates the transport of iron and other divalent metal ions like copper and zinc across the mitochondrial inner membrane in a pyrimidine nucleotide-dependent fashion. Catalyzes the co-import of pyrimidine nucleotides and divalent metal ions including ferrous iron. Participates in mitochondrial genome maintenance, regulation of mitochondrial membrane potential and mitochondrial respiration. This chain is Mitochondrial carrier protein rim2 (rim2), found in Schizosaccharomyces pombe (strain 972 / ATCC 24843) (Fission yeast).